We begin with the raw amino-acid sequence, 424 residues long: Myb family transcription factor RLI1 (424 aa).

The disordered stretch occupies residues 144–165; the sequence is RPQKRDSGERTPLPPPSQQQHQ. The HTH myb-type domain occupies 238–298; sequence APSKTRIRWT…HLQKYRIAKY (61 aa). Positions 269–294 form a DNA-binding region, H-T-H motif; it reads PKGILKLMNSDGLTIYHIKSHLQKYR. The stretch at 326–391 forms a coiled coil; that stretch reads MQITEALRVQ…ELDDVVAFAA (66 aa). An LHEQLE motif is present at residues 342–347; it reads LHEQLE.

This sequence belongs to the MYB-CC family. In terms of assembly, interacts with SPX1 and SPX2 in the nucleus; these interactions prevent binding to the promoters of target genes, thus regulating negatively leaf inclination in response to phosphate (Pi) starvation. As to quaternary structure, homodimer. Interacts with PHR2 in the nucleus. As to expression, mostly expressed in roots and leaves blades and, to a lower extent, in leaves sheaths, culms and panicles. Localized in leaves lamina joints. In terms of tissue distribution, expressed equally in shoots and roots. Mostly expressed in shoots and, to a lower extent, in roots.

The protein resides in the nucleus. Transcription factor binding to specific DNA sequences of target genes promoters, such as the motif R1BS 5'-NAKATNCN-3' and the motif P1BS 5'-GNATATNC-3' to trigger their expression. Nitrate-induced component involved in modulating phosphate (Pi) response and homeostasis together with PHR2; activates directly the expression of Pi starvation-induced (PSI) genes upon nitrate disponibility, thus triggering the nitrate-induced phosphate response (NIPR) promoting Pi uptake activity. In terms of biological role, binds preferentially to the P1BS motif 5'-GNATATNC-3' in target genes promoters. Its function is as follows. Binds preferentially to the R1BS motif 5'-NAKATNCN-3' in target genes promoters, including several genes involved in the plant hormone signal transduction pathway. Involved in the shoot architecture; positively regulates leaf inclination by affecting lamina joint cell elongation via the direct promotion of ILI4/BU1 and BC1 genes expression, especially in response to phosphate (Pi) availability. Regulates both brassinolide (BL) biosynthesis and signaling by directly activating BL-biosynthesis and signaling genes. This Oryza sativa subsp. japonica (Rice) protein is Myb family transcription factor RLI1.